A 186-amino-acid polypeptide reads, in one-letter code: Myosin light chain 1, skeletal muscle isoform (186 aa).

Met-1 is modified (blocked amino end (Met)). The tract at residues 1–26 is disordered; that stretch reads MPKAPAKKAEPAPAPAPAPEPAPAPA. Positions 12–26 are enriched in pro residues; the sequence is APAPAPAPEPAPAPA. EF-hand domains follow at residues 42-77 and 119-154; these read DQIEDYREAFGLFDRVGDNKVAYNQIADIMRALGQN and AGFEDYVEGLRVFDKEGNGTVMGAELRIVLSTLGEK.

In terms of assembly, myosin is a hexamer of 2 heavy chains and 4 light chains.

The polypeptide is Myosin light chain 1, skeletal muscle isoform (Chelon ramada (Thin-lipped grey mullet)).